Consider the following 667-residue polypeptide: Cylicin-1 (667 aa).

Disordered regions lie at residues 121–251 (PYTH…SSNV) and 275–634 (SQNN…ILPS). A compositionally biased stretch (basic and acidic residues) spans 129–172 (KKAESKKYKDDKKETALKKISKKDTGPHEVDEKPKRRNKADKTP). The span at 173–182 (SKSSHGSQLS) shows a compositional bias: low complexity. Over residues 187–197 (SKSETNPESKD) the composition is skewed to basic and acidic residues. Low complexity predominate over residues 223 to 237 (STSTKKYSKSSKNNS). Polar residues predominate over residues 238–251 (DAVSETCSKNSSNV). 9 stretches are compositionally biased toward basic and acidic residues: residues 284-326 (KKDA…KDTE), 345-371 (SKKD…DAKK), 380-394 (SKKD…KDAE), 417-431 (SKKD…KDAE), 438-464 (GDSK…KDAV), 483-506 (SKKD…KEST), 521-533 (SKKD…KKAT), 549-558 (KKTEMFKSSD), and 583-593 (DSKKDAVEPKR). A run of 9 repeats spans residues 287 to 305 (AKKD…DSKD), 306 to 337 (AKKD…DSKD), 338 to 368 (AKKG…DSKD), 369 to 405 (AKKD…DSKD), 406 to 442 (AKKD…DSKN), 443 to 475 (AKKD…SEGD), 476 to 516 (AKKS…ESKK), 517 to 547 (VKRD…SKRY), and 548 to 569 (LKKT…FKPG). A 9 X approximate tandem repeats region spans residues 287-569 (AKKDAKGKGS…ESEESLFKPG (283 aa)). The span at 624–633 (PLPPCEPILP) shows a compositional bias: pro residues.

Interacts with proteins of spermatozoa head including ACTL7A, CCIN, FAM209A and SPACA1; the interactions may be necessary for proper acrosome attachment to the nuclear envelope. In terms of tissue distribution, testis.

It is found in the cytoplasm. The protein resides in the cytoskeleton. Its subcellular location is the perinuclear theca. It localises to the calyx. Functionally, plays a role in the establishment of normal sperm morphology during spermatogenesis and is required for acrosome attachment to the nuclear envelope. The chain is Cylicin-1 (CYLC1) from Bos taurus (Bovine).